Reading from the N-terminus, the 579-residue chain is SLAIN motif-containing protein 1 (579 aa).

6 disordered regions span residues 1–21 (MMAE…GPGP), 60–95 (LLLQ…GPGA), 135–162 (GGGG…PPTL), 233–258 (YTSR…LEDD), 289–313 (STSA…TCSD), and 347–454 (IPHS…PGQI). Over residues 9 to 21 (ASPVAASGAGPGP) the composition is skewed to low complexity. Residues 21-56 (PVVNAELEVKKLQELVRKLEKQNEQLRSRAASAAAA) are a coiled coil. Over residues 63–73 (QPPPPSAPPPA) the composition is skewed to pro residues. The span at 141 to 154 (EPGTAGTPPGEAAT) shows a compositional bias: low complexity. Polar residues predominate over residues 233–243 (YTSRGSPLSPQ). Position 241 is a phosphoserine (S241). 2 stretches are compositionally biased toward low complexity: residues 244-253 (SSIDSELSTS) and 289-305 (STSA…SLSS). Residues 362 to 373 (SPSTQYFPSNNF) are compositionally biased toward polar residues. The segment covering 374–390 (QQPQYYPPQAQTADQQP) has biased composition (low complexity). The span at 412–432 (AAASSNLSSPVTVRSSQSFDS) shows a compositional bias: polar residues. R469 bears the Asymmetric dimethylarginine mark. Positions 479-516 (SPTVQGSSSSGSSGSSGGSGSGMPLSNGTQLYSTTGIP) are disordered. Positions 502–516 (PLSNGTQLYSTTGIP) are enriched in polar residues. Asymmetric dimethylarginine is present on R554.

It belongs to the SLAIN motif-containing family. As to quaternary structure, interacts with MAPRE1, MAPRE2, MAPRE3 and CKAP5. Interacts with ZDHHC17 (via ANK repeats). In terms of tissue distribution, expressed in embryonic stem cells. Expressed in adult bone marrow, brain, kidney, lung, testis and thymus. Expressed in colon. Isoform 1 is highly expressed in brain. Isoform 2 is more widely expressed in bone marrow, brain, colon, kidney, lung and thymus.

The protein resides in the cytoplasm. It is found in the cytoskeleton. Its function is as follows. Microtubule plus-end tracking protein that might be involved in the regulation of cytoplasmic microtubule dynamics, microtubule organization and microtubule elongation. This chain is SLAIN motif-containing protein 1 (Slain1), found in Mus musculus (Mouse).